The following is a 160-amino-acid chain: UPF0178 protein BB1267 (160 aa).

This sequence belongs to the UPF0178 family.

The chain is UPF0178 protein BB1267 from Bordetella bronchiseptica (strain ATCC BAA-588 / NCTC 13252 / RB50) (Alcaligenes bronchisepticus).